The chain runs to 457 residues: Siroheme synthase (457 aa).

The precorrin-2 dehydrogenase /sirohydrochlorin ferrochelatase stretch occupies residues 1 to 204 (MDHLPIFCQL…NDQKAITETT (204 aa)). Residues 22-23 (DV) and 43-44 (LA) each bind NAD(+). Phosphoserine is present on Ser128. A uroporphyrinogen-III C-methyltransferase region spans residues 216–457 (GEVVLVGAGP…RDKLNWFSNH (242 aa)). Residue Pro225 coordinates S-adenosyl-L-methionine. The Proton acceptor role is filled by Asp248. Catalysis depends on Lys270, which acts as the Proton donor. Residues 301–303 (GGD), Ile306, 331–332 (TA), Met382, and Gly411 each bind S-adenosyl-L-methionine.

This sequence in the N-terminal section; belongs to the precorrin-2 dehydrogenase / sirohydrochlorin ferrochelatase family. The protein in the C-terminal section; belongs to the precorrin methyltransferase family.

It carries out the reaction uroporphyrinogen III + 2 S-adenosyl-L-methionine = precorrin-2 + 2 S-adenosyl-L-homocysteine + H(+). It catalyses the reaction precorrin-2 + NAD(+) = sirohydrochlorin + NADH + 2 H(+). The catalysed reaction is siroheme + 2 H(+) = sirohydrochlorin + Fe(2+). Its pathway is cofactor biosynthesis; adenosylcobalamin biosynthesis; precorrin-2 from uroporphyrinogen III: step 1/1. It participates in cofactor biosynthesis; adenosylcobalamin biosynthesis; sirohydrochlorin from precorrin-2: step 1/1. The protein operates within porphyrin-containing compound metabolism; siroheme biosynthesis; precorrin-2 from uroporphyrinogen III: step 1/1. It functions in the pathway porphyrin-containing compound metabolism; siroheme biosynthesis; siroheme from sirohydrochlorin: step 1/1. Its pathway is porphyrin-containing compound metabolism; siroheme biosynthesis; sirohydrochlorin from precorrin-2: step 1/1. In terms of biological role, multifunctional enzyme that catalyzes the SAM-dependent methylations of uroporphyrinogen III at position C-2 and C-7 to form precorrin-2 via precorrin-1. Then it catalyzes the NAD-dependent ring dehydrogenation of precorrin-2 to yield sirohydrochlorin. Finally, it catalyzes the ferrochelation of sirohydrochlorin to yield siroheme. The protein is Siroheme synthase of Escherichia coli (strain 55989 / EAEC).